The following is a 1938-amino-acid chain: Myosin-6 (1938 aa).

A Myosin N-terminal SH3-like domain is found at 31–80 (DIRTECFVPDDKEEYVKAKIVSREGGKVTAETENGKTVTVKEDQVMQQNP). In terms of domain architecture, Myosin motor spans 84–779 (DKIEDMAMLT…LLGLLEEMRD (696 aa)). The residue at position 128 (Lys128) is an N6,N6,N6-trimethyllysine. Position 177–184 (177–184 (GESGAGKT)) interacts with ATP. Thr378 is modified (phosphothreonine). Phosphoserine is present on Ser416. Actin-binding stretches follow at residues 656–678 (LNKL…IPNE) and 758–772 (KFGH…GLLG). Residues 782-811 (LSRIITRIQAQARGQLMRIEFKKMVERRDA) enclose the IQ domain. Calmodulin-binding regions lie at residues 789 to 806 (IQAQ…KKMV) and 815 to 832 (IQWN…PWMK). Positions 842-1938 (KSAETEKEMA…GAKQKMHDEE (1097 aa)) form a coiled coil. Residues Ser1089 and Ser1138 each carry the phosphoserine modification. Tyr1260 bears the Phosphotyrosine mark. Ser1270 is modified (phosphoserine). Residues Thr1276 and Thr1283 each carry the phosphothreonine modification. The residue at position 1308 (Ser1308) is a Phosphoserine. Position 1309 is a phosphotyrosine (Tyr1309). Thr1310 is subject to Phosphothreonine. The residue at position 1511 (Ser1511) is a Phosphoserine. Thr1514 and Thr1680 each carry phosphothreonine. The interval 1907 to 1938 (AEERADIAESQVNKLRAKSRDIGAKQKMHDEE) is disordered. The segment covering 1924–1938 (KSRDIGAKQKMHDEE) has biased composition (basic and acidic residues).

Belongs to the TRAFAC class myosin-kinesin ATPase superfamily. Myosin family. In terms of assembly, muscle myosin is a hexameric protein that consists of 2 heavy chain subunits (MHC), 2 alkali light chain subunits (MLC) and 2 regulatory light chain subunits (MLC-2).

The protein resides in the cytoplasm. The protein localises to the myofibril. Functionally, muscle contraction. This Rattus norvegicus (Rat) protein is Myosin-6 (Myh6).